A 306-amino-acid chain; its full sequence is Olfactory receptor 8G17 (306 aa).

The Extracellular segment spans residues 1–28; that stretch reads MEKGNQSTVNKFFLSGLTEQPELQLPLF. The N-linked (GlcNAc...) asparagine glycan is linked to N5. A helical membrane pass occupies residues 29 to 49; it reads LLFLGIYLLTVLGNLGMIILI. Topologically, residues 50–56 are cytoplasmic; it reads LLSSYLH. The chain crosses the membrane as a helical span at residues 57-77; that stretch reads TPMYFFLSSLSFIDFCQSTVI. Residues 78 to 97 lie on the Extracellular side of the membrane; that stretch reads TPKMLVKFVREKNEISYPEC. A helical transmembrane segment spans residues 98–118; the sequence is ITQLCFFVIFAVSESYMLAAM. The Cytoplasmic portion of the chain corresponds to 119–143; the sequence is AYDRYVAICSPLLYSSIMSQHKCLS. Residues 144-164 form a helical membrane-spanning segment; that stretch reads LVLGVYILGIVCASAHVGCIF. Residues 165–196 lie on the Extracellular side of the membrane; it reads RIDFCKSDLINHYFCDLISILNLSCSNIFVND. A helical membrane pass occupies residues 197–217; sequence LVILIFSLINTIFPTLTILSS. At 218-236 the chain is on the cytoplasmic side; sequence YAFIIISILRIKSTEGRSK. The chain crosses the membrane as a helical span at residues 237–257; it reads AFSTCSSHISAVAIFYISAGF. The Extracellular portion of the chain corresponds to 258–271; the sequence is TYLNPSSSHSMDEG. The chain crosses the membrane as a helical span at residues 272 to 292; sequence KVSSIFYTIIVPMLNPLIYSL. Topologically, residues 293–306 are cytoplasmic; the sequence is RNKDVKIALKKMIE.

It belongs to the G-protein coupled receptor 1 family.

It is found in the cell membrane. Its function is as follows. Odorant receptor. This chain is Olfactory receptor 8G17, found in Mus musculus (Mouse).